The primary structure comprises 175 residues: MRVLGIDPGLTRCGVGVVEGVPGRPCTLIAYHVVRTDPDDELPLRLLHLDRSLTALVAEHRPDGVAVERVFSQHNVRTVMGTAQASGVAVLAGARAGIPVQTYTPSEVKAAVTGSGQADKAQMTAMVTRLLRLSEPPRPADAADALALAICHVWRGGTRSRLAAAADRARRGGGR.

Residues Asp-7, Glu-68, and Asp-141 contribute to the active site. Mg(2+)-binding residues include Asp-7, Glu-68, and Asp-141.

It belongs to the RuvC family. In terms of assembly, homodimer which binds Holliday junction (HJ) DNA. The HJ becomes 2-fold symmetrical on binding to RuvC with unstacked arms; it has a different conformation from HJ DNA in complex with RuvA. In the full resolvosome a probable DNA-RuvA(4)-RuvB(12)-RuvC(2) complex forms which resolves the HJ. It depends on Mg(2+) as a cofactor.

The protein localises to the cytoplasm. The enzyme catalyses Endonucleolytic cleavage at a junction such as a reciprocal single-stranded crossover between two homologous DNA duplexes (Holliday junction).. In terms of biological role, the RuvA-RuvB-RuvC complex processes Holliday junction (HJ) DNA during genetic recombination and DNA repair. Endonuclease that resolves HJ intermediates. Cleaves cruciform DNA by making single-stranded nicks across the HJ at symmetrical positions within the homologous arms, yielding a 5'-phosphate and a 3'-hydroxyl group; requires a central core of homology in the junction. The consensus cleavage sequence is 5'-(A/T)TT(C/G)-3'. Cleavage occurs on the 3'-side of the TT dinucleotide at the point of strand exchange. HJ branch migration catalyzed by RuvA-RuvB allows RuvC to scan DNA until it finds its consensus sequence, where it cleaves and resolves the cruciform DNA. The protein is Crossover junction endodeoxyribonuclease RuvC of Salinispora arenicola (strain CNS-205).